The following is a 3767-amino-acid chain: Transmembrane cell adhesion receptor mua-3 (3767 aa).

A signal peptide spans 1-24 (MQAGISIFFLFLHIPIFFVNCSNS). The Extracellular portion of the chain corresponds to 25-3417 (TSCVAREEFQ…CQVAPSNASL (3393 aa)). Residues 26–63 (SCVAREEFQCKMDDSCISMKKWQDGVDDCYDGSDEVCL) enclose the LDL-receptor class A 1 domain. 10 disulfide bridges follow: Cys27–Cys41, Cys35–Cys54, Cys62–Cys76, Cys69–Cys89, Cys97–Cys110, Cys104–Cys123, Cys131–Cys144, Cys138–Cys157, Cys165–Cys179, and Cys172–Cys192. 3 consecutive LDL-receptor class A domains span residues 96–132 (GCPA…EPCA), 133–166 (QNQF…EECT), and 167–209 (TSQF…ANCT). N-linked (GlcNAc...) asparagine glycosylation is found at Asn201 and Asn207. 17 EGF-like domains span residues 225 to 268 (KLKF…DKCI), 375 to 416 (NRDD…GTCR), 418 to 466 (LIDE…RKCR), 468 to 517 (LINE…RNCT), 519 to 566 (AINE…RKCV), 614 to 663 (RANP…RKCV), 665 to 713 (AVDE…RSCK), 714 to 760 (KADM…RVCR), 762 to 810 (VVNE…KNCV), 816 to 860 (DPPE…GRCV), 861 to 908 (VINE…RICR), 910 to 961 (RVNE…RRCI), 963 to 1012 (AVNE…RICT), 1029 to 1070 (TDDG…GSCR), 1071 to 1118 (VYSA…RICK), 1120 to 1168 (LINE…RQCT), and 1170 to 1219 (SNNE…RVCT). Cystine bridges form between Cys229–Cys243, Cys235–Cys252, Cys254–Cys267, Cys381–Cys392, Cys386–Cys402, Cys404–Cys415, Cys422–Cys435, Cys429–Cys444, Cys446–Cys465, Cys472–Cys486, Cys480–Cys495, Cys497–Cys516, Cys523–Cys536, Cys530–Cys545, Cys547–Cys565, Cys618–Cys632, Cys626–Cys642, Cys644–Cys662, Cys669–Cys682, Cys676–Cys691, Cys693–Cys712, Cys718–Cys729, Cys723–Cys738, Cys740–Cys759, Cys766–Cys779, Cys773–Cys788, Cys790–Cys809, Cys820–Cys836, Cys828–Cys845, Cys847–Cys859, Cys865–Cys879, Cys873–Cys888, Cys890–Cys907, Cys914–Cys930, Cys924–Cys939, Cys941–Cys960, Cys967–Cys981, Cys975–Cys990, Cys992–Cys1011, Cys1033–Cys1046, Cys1040–Cys1055, Cys1057–Cys1069, Cys1075–Cys1087, Cys1081–Cys1096, Cys1098–Cys1117, Cys1124–Cys1137, Cys1131–Cys1146, Cys1148–Cys1167, Cys1174–Cys1188, Cys1182–Cys1197, and Cys1199–Cys1218. A glycan (N-linked (GlcNAc...) asparagine) is linked at Asn383. An N-linked (GlcNAc...) asparagine glycan is attached at Asn515. Residues 1230–1406 (DLVFLIDGSG…DLDTRLRSMI (177 aa)) form the VWFA domain. An N-linked (GlcNAc...) asparagine glycan is attached at Asn1350. EGF-like domains lie at 1421 to 1466 (SEDV…RVCG), 1466 to 1510 (GGDL…GFCV), 1521 to 1562 (HDAN…GQCA), 1563 to 1608 (YPGS…DICL), 1608 to 1656 (LKNE…RVCV), 1658 to 1706 (LQNE…MVCK), 1708 to 1755 (LVNE…RRCE), 1759 to 1807 (TNDK…RLCI), 1809 to 1860 (VIPE…RLCK), 1862 to 1911 (LQNE…RKCK), 1913 to 1961 (LINE…RRCL), 1963 to 2011 (RINE…RICR), 2014 to 2062 (LVDE…RLCQ), 2068 to 2112 (PPPE…GSCS), 2113 to 2160 (IINE…RMCK), 2162 to 2208 (MVNE…RICK), 2210 to 2258 (LTNE…RACR), 2260 to 2308 (LVNE…RVCL), 2310 to 2358 (FINE…RVCV), 2360 to 2408 (LVDE…RVCS), 2409 to 2455 (APEV…RVCV), 2456 to 2504 (RNNA…RVCE), 2513 to 2563 (PRHP…RLCV), 2565 to 2616 (TEPV…RICK), 2618 to 2666 (LINE…RICS), 2668 to 2714 (SVNE…HRCS), 2716 to 2763 (MINE…RICR), 2763 to 2811 (RLNE…RICI), and 2833 to 2872 (REFP…GKCQ). 66 disulfides stabilise this stretch: Cys1425/Cys1441, Cys1433/Cys1450, Cys1452/Cys1465, Cys1470/Cys1484, Cys1478/Cys1494, Cys1496/Cys1509, Cys1525/Cys1538, Cys1532/Cys1547, Cys1549/Cys1561, Cys1567/Cys1583, Cys1575/Cys1592, Cys1594/Cys1607, Cys1612/Cys1625, Cys1619/Cys1634, Cys1636/Cys1655, Cys1662/Cys1675, Cys1669/Cys1684, Cys1686/Cys1705, Cys1712/Cys1726, Cys1720/Cys1735, Cys1737/Cys1754, Cys1763/Cys1776, Cys1770/Cys1786, Cys1788/Cys1806, Cys1813/Cys1829, Cys1821/Cys1838, Cys1840/Cys1859, Cys1866/Cys1880, Cys1873/Cys1889, Cys1891/Cys1910, Cys1917/Cys1930, Cys1924/Cys1939, Cys1941/Cys1960, Cys1967/Cys1980, Cys1974/Cys1989, Cys1991/Cys2010, Cys2018/Cys2031, Cys2025/Cys2040, Cys2042/Cys2061, Cys2072/Cys2088, Cys2080/Cys2097, Cys2099/Cys2111, Cys2117/Cys2131, Cys2125/Cys2140, Cys2142/Cys2159, Cys2166/Cys2180, Cys2174/Cys2189, Cys2191/Cys2207, Cys2214/Cys2228, Cys2222/Cys2237, Cys2239/Cys2257, Cys2264/Cys2278, Cys2272/Cys2287, Cys2289/Cys2307, Cys2314/Cys2327, Cys2321/Cys2336, Cys2338/Cys2357, Cys2364/Cys2377, Cys2371/Cys2386, Cys2388/Cys2407, Cys2413/Cys2425, Cys2419/Cys2435, Cys2437/Cys2454, Cys2460/Cys2474, Cys2468/Cys2483, and Cys2485/Cys2503. The segment at 2492–2521 (RSPDSSQRGRVCEPPPPPSPPPRHPCQDPE) is disordered. Over residues 2504–2515 (EPPPPPSPPPRH) the composition is skewed to pro residues. Intrachain disulfides connect Cys2517–Cys2531, Cys2525–Cys2541, Cys2543–Cys2562, Cys2569–Cys2583, Cys2577–Cys2594, Cys2596–Cys2615, Cys2622–Cys2636, Cys2630–Cys2645, Cys2647–Cys2665, Cys2672–Cys2686, Cys2680–Cys2695, Cys2697–Cys2713, Cys2720–Cys2734, Cys2728–Cys2743, Cys2745–Cys2762, Cys2767–Cys2781, Cys2775–Cys2790, Cys2792–Cys2810, Cys2837–Cys2850, Cys2842–Cys2856, and Cys2858–Cys2871. One can recognise an SEA 1 domain in the interval 2873–2999 (EVQETPFELR…GSLRVASDTD (127 aa)). Asn2944 carries an N-linked (GlcNAc...) asparagine glycan. The EGF-like 47 domain occupies 3009–3048 (EWGNCGGMSCKEHLKEVCIAGHICGCPDGMKRRDANSECR). Cystine bridges form between Cys3013-Cys3026, Cys3018-Cys3032, and Cys3034-Cys3047. Residues 3049 to 3174 (VVESWNVPLW…SELYLNPTQP (126 aa)) enclose the SEA 2 domain. Residues Asn3120 and Asn3130 are each glycosylated (N-linked (GlcNAc...) asparagine). 3 consecutive EGF-like domains span residues 3176-3220 (PFNP…KKCL), 3224-3272 (GFNE…SLCV), and 3272-3324 (VLDY…TLCM). Cystine bridges form between Cys3180/Cys3191, Cys3185/Cys3201, Cys3203/Cys3219, Cys3228/Cys3242, Cys3236/Cys3251, Cys3253/Cys3271, Cys3276/Cys3288, Cys3282/Cys3297, Cys3299/Cys3323, Cys3332/Cys3345, Cys3339/Cys3354, Cys3356/Cys3372, Cys3377/Cys3386, Cys3380/Cys3397, and Cys3399/Cys3408. Asn3285 is a glycosylation site (N-linked (GlcNAc...) asparagine). Positions 3328–3373 (DVDECALGLNNCSGVAHCIDRAVGYTCKCPDGYIDGNPDEPGRVCG) constitute an EGF-like 51; calcium-binding domain. An N-linked (GlcNAc...) asparagine; atypical glycan is attached at Asn3337. A glycan (N-linked (GlcNAc...) asparagine) is linked at Asn3338. The region spanning 3373-3409 (GALLCDLCNAHGDCVHNTATNNITCVCTDGWTGPQCQ) is the EGF-like 52 domain. The N-linked (GlcNAc...) asparagine glycan is linked to Asn3394. Asn3414 carries N-linked (GlcNAc...) asparagine glycosylation. A helical transmembrane segment spans residues 3418 to 3438 (VLLILLALLFLLLTLCCLLYF). The Cytoplasmic portion of the chain corresponds to 3439-3767 (CTKCHCFKGR…SQTSTHVTKK (329 aa)). The interval 3582–3729 (TTTTDEQGNT…EEDVEHSVGD (148 aa)) is disordered. Over residues 3588–3597 (QGNTIVTTTE) the composition is skewed to polar residues. Low complexity predominate over residues 3630–3665 (QSQSQQQQSMSQGMSQSMSQHATSAGYSSSGMESSA). Over residues 3675–3684 (HTGERERGGS) the composition is skewed to basic and acidic residues. Residues 3690–3702 (IGRARGMAAASSG) are compositionally biased toward low complexity.

Expressed in the hypodermis at the sites of muscle contact, in striated muscles including body wall muscles, the anal sphincter muscles and the junctions between the anal sphincter muscle and rectal cuticle. Also expressed in non-muscle cells including the excretory duct cell and pore cells.

It localises to the cell membrane. Its subcellular location is the cell junction. It is found in the hemidesmosome. In terms of biological role, involved in cell adhesion and required for organ positioning and attachment. At the hypodermal surface, required for attachment of the hypdermermis to the basal cuticle in postembryonic development, possibly through intermediate filaments of the cytoskeleton. This chain is Transmembrane cell adhesion receptor mua-3, found in Caenorhabditis elegans.